Consider the following 601-residue polypeptide: Tripeptidyl-peptidase SED4 (601 aa).

The N-terminal stretch at 1–22 (MVSFTLRAIGACLVSLPALVTA) is a signal peptide. A propeptide spans 23-202 (APTSHISGDF…SVFTSDLEIT (180 aa)) (removed in mature form). Asn210 and Asn281 each carry an N-linked (GlcNAc...) asparagine glycan. Residues 212–601 (TITPDCIRDL…ETLSKLVLQY (390 aa)) form the Peptidase S53 domain. Catalysis depends on charge relay system residues Glu288 and Asp292. The N-linked (GlcNAc...) asparagine glycan is linked to Asn323. The active-site Charge relay system is Ser504. Ca(2+) contacts are provided by Asp546 and Ile547. Residue Asn575 is glycosylated (N-linked (GlcNAc...) asparagine). Positions 579 and 581 each coordinate Ca(2+).

Ca(2+) serves as cofactor.

The protein resides in the secreted. Its subcellular location is the extracellular space. It catalyses the reaction Release of an N-terminal tripeptide from a polypeptide.. Its function is as follows. Secreted tripeptidyl-peptidase which degrades proteins at acidic pHs and is involved in virulence. In Arthroderma otae (strain ATCC MYA-4605 / CBS 113480) (Microsporum canis), this protein is Tripeptidyl-peptidase SED4 (SED4).